A 7968-amino-acid chain; its full sequence is Obscurin (7968 aa).

Ig-like domains are found at residues 10 to 100 (PRFL…LQVD), 110 to 202 (PHFL…LVVD), 236 to 322 (PASP…QTYS), 331 to 414 (PAVP…RTVA), and 420 to 508 (GNLL…VSAP). Cysteine 31 and cysteine 82 are disulfide-bonded. Residues 228–249 (EAMRAEGAPASPPSTGTRTCTV) are disordered. Over residues 240-249 (PSTGTRTCTV) the composition is skewed to polar residues. 2 disulfide bridges follow: cysteine 259–cysteine 311 and cysteine 354–cysteine 404. Residue serine 395 is modified to Phosphoserine. Residues 515-612 (PPVDPVVKAR…FPGTVHLAPK (98 aa)) enclose the Fibronectin type-III 1 domain. Ig-like domains are found at residues 619–698 (LKAV…MEVR), 701–790 (PGLT…YQLS), 798–884 (LHKD…LRVS), 886–977 (PKVV…DVKE), 978–1066 (PKVV…FRLH), 1070–1161 (PKMM…HITE), 1162–1252 (PKGV…LHIT), 1254–1345 (PKAV…DVSE), 1346–1432 (PKAV…LSFS), 1438–1524 (PKVV…LSFH), 1530–1621 (PKAV…HVAE), and 1622–1719 (PKVV…PQIS). Disulfide bonds link cysteine 819/cysteine 870, cysteine 912/cysteine 962, cysteine 1004/cysteine 1054, cysteine 1096/cysteine 1146, cysteine 1188/cysteine 1238, cysteine 1280/cysteine 1330, cysteine 1372/cysteine 1422, cysteine 1464/cysteine 1514, cysteine 1556/cysteine 1606, cysteine 1648/cysteine 1698, cysteine 1723/cysteine 1791, and cysteine 1830/cysteine 1880. The Fibronectin type-III 2 domain occupies 1731–1808 (KEHEDIILTA…DFPVQVEEVA (78 aa)). Ig-like domains follow at residues 1809-1894 (AKFC…LTVS), 1896-1982 (PRVV…AALR), 1987-2071 (PVLF…AKLT), 2077-2162 (VRLV…LVVT), 2165-2249 (PVSF…ASVK), 2289-2380 (PVTL…QSIT), 2468-2559 (PVVL…REVT), 2564-2643 (LQDA…LEVR), 2646-2730 (PVVF…ARVR), 2736-2823 (VGIT…LIVR), 2826-2908 (PAAI…STAS), 2920-2999 (EELT…AQLL), 3003-3092 (RRVH…LRVT), 3095-3183 (PSVF…VHAR), 3184-3268 (PVRF…ATLT), 3273-3356 (PAQF…ASLT), 3359-3444 (PMPA…ATLT), 3449-3532 (PAKF…ATLT), 3537-3620 (PARF…AMLT), 3625-3708 (PIKF…AMLT), 3713-3796 (PSKF…ATLT), 3801-3884 (PARF…ATLT), 3890-3973 (PVFR…ATLT), 3978-4062 (PVRF…ASLS), 4068-4160 (PKFK…PEVT), 4171-4239 (TADE…NHAS), 4248-4337 (PEVT…LKVT), 4340-4427 (NTVV…FLTV), and 4430-4518 (WRLE…ARLT). 3 cysteine pairs are disulfide-bonded: cysteine 2187–cysteine 2237, cysteine 2311–cysteine 2361, and cysteine 2490–cysteine 2540. Cysteine 2668 and cysteine 2718 are joined by a disulfide. Disulfide bonds link cysteine 2848/cysteine 2898 and cysteine 2937/cysteine 2987. At serine 2889 the chain carries Phosphoserine. 12 cysteine pairs are disulfide-bonded: cysteine 3117-cysteine 3167, cysteine 3206-cysteine 3256, cysteine 3295-cysteine 3344, cysteine 3383-cysteine 3432, cysteine 3471-cysteine 3520, cysteine 3559-cysteine 3608, cysteine 3647-cysteine 3696, cysteine 3735-cysteine 3784, cysteine 3823-cysteine 3872, cysteine 3911-cysteine 3961, cysteine 4000-cysteine 4050, and cysteine 4089-cysteine 4141. Serine 4015 bears the Phosphoserine mark. Cysteine 4453 and cysteine 4508 are oxidised to a cystine. The Fibronectin type-III 3 domain maps to 4525–4619 (PPEDAEVVAR…LPQTVRLAEP (95 aa)). An Ig-like 47 domain is found at 4624–4714 (PPQPSAPESR…AAATFQVALS (91 aa)). Residues 4749–4785 (MSREPTLDSISELPEEDGRSQRLPQEAEEVAPDLSEG) are disordered. Serine 4750 carries the post-translational modification Phosphoserine. Phosphothreonine is present on threonine 4754. Serine 4757 carries the phosphoserine modification. Threonine 4788 bears the Phosphothreonine mark. Serine 4805 is subject to Phosphoserine. The segment at 4820–4860 (LKKAGRPGTSPLASKVGAPAAPSVKPQQQQEPLAAVRPPLG) is disordered. The IQ domain maps to 4872-4901 (MDKAAVKIQAAFKGYKVRKEMKQQEGPMFS). Ig-like domains are found at residues 4898-4989 (PMFS…VVVS) and 5126-5215 (PVFL…AELR). Cystine bridges form between cysteine 4919/cysteine 4971 and cysteine 5147/cysteine 5199. Positions 5238-5256 (AQGYLSSREQEGTESTTDE) are enriched in polar residues. Positions 5238–5257 (AQGYLSSREQEGTESTTDEG) are disordered. Ig-like domains are found at residues 5260–5349 (PQVV…ARLL) and 5371–5467 (PRML…LHVS). A disordered region spans residues 5554–5596 (AKLQVPGGDSDEDSKTPSASPRHGRSRPSSSIQESSSESEDGD). Serine 5563 is modified (phosphoserine). Threonine 5569 is subject to Phosphothreonine. The segment covering 5570–5589 (PSASPRHGRSRPSSSIQESS) has biased composition (low complexity). A phosphoserine mark is found at serine 5571 and serine 5573. One can recognise an SH3 domain in the interval 5600–5667 (EIFDIYVVTA…SPAYLDRRLK (68 aa)). The DH domain maps to 5693-5877 (RLSSVIQELL…SALPQRAENK (185 aa)). Residues 5895–6004 (EPIRQGHFIV…WVKEICGIQQ (110 aa)) enclose the PH domain. Arginine 5975 is a binding site for a 1,2-diacyl-sn-glycero-3-phospho-(1D-myo-inositol-4,5-bisphosphate). Position 5980 (arginine 5980) interacts with a 1,2-diacyl-sn-glycero-3-phospho-(1D-myo-inositol-3,4-bisphosphate). 2 consecutive Ig-like domains span residues 6014–6097 (PDFE…GNCS) and 6108–6200 (PRFV…LRIQ). Disulfide bonds link cysteine 6035–cysteine 6087 and cysteine 6129–cysteine 6182. Residues 6237–6296 (RLLGPKAPGPSTGDLTGPGPCPRGAPALQETGSQPPVTGTSEAPAVPPRVPQPLLHEGPE) form a disordered region. A compositionally biased stretch (polar residues) spans 6266 to 6277 (ETGSQPPVTGTS). The region spanning 6357–6445 (PSMQVTIEDV…GQVLCKAELL (89 aa)) is the Ig-like 54 domain. Positions 6468 to 6721 (YEVKEEIGRG…AAQCLSHPWF (254 aa)) constitute a Protein kinase 1 domain. Residues 6474 to 6482 (IGRGVFGFV) and lysine 6497 each bind ATP. The Proton acceptor role is filled by aspartate 6587. 3 disordered regions span residues 6777-6863 (GVAR…AQGC), 6952-7176 (SGTH…TMRK), and 7217-7272 (VSQS…TPWE). Phosphoserine is present on serine 6831. Residues 7052–7061 (AVAPCPPGSF) show a composition bias toward pro residues. The segment covering 7115-7139 (SSPGSASQASSSQVSSLRVGSSQVG) has biased composition (low complexity). A compositionally biased stretch (polar residues) spans 7160–7172 (DSTPTLQRPQEQA). Residues 7227-7242 (EARAESQSEEQQEARA) are compositionally biased toward basic and acidic residues. Position 7244 is a phosphoserine (serine 7244). In terms of domain architecture, Ig-like 55 spans 7463–7552 (PTFLRELSDE…GTVTTTGVLR (90 aa)). A disulfide bridge connects residues cysteine 7484 and cysteine 7536. Residues 7557–7649 (PSSSPCPDIG…PSEQVLLGGP (93 aa)) enclose the Fibronectin type-III 4 domain. A Protein kinase 2 domain is found at 7672–7924 (FAFQTQIQRG…ASSCLQCPWL (253 aa)). ATP is bound by residues 7678-7686 (IQRGRFSVV) and lysine 7701. The Proton acceptor role is filled by aspartate 7791.

Belongs to the protein kinase superfamily. CAMK Ser/Thr protein kinase family. Interacts (via protein kinase domain 2) with CDH2 and (via protein kinase domain 1) with ATP1B1. Isoform 3 interacts with TTN/titin and calmodulin. Isoform 3 interacts with ANK1 isoform Mu17/ank1.5. Mg(2+) serves as cofactor. Autophosphorylated by protein kinase domains 1 and 2.

The protein resides in the cytoplasm. It localises to the myofibril. Its subcellular location is the sarcomere. It is found in the m line. The protein localises to the z line. The protein resides in the cell membrane. It localises to the sarcolemma. Its subcellular location is the nucleus. The enzyme catalyses L-seryl-[protein] + ATP = O-phospho-L-seryl-[protein] + ADP + H(+). The catalysed reaction is L-threonyl-[protein] + ATP = O-phospho-L-threonyl-[protein] + ADP + H(+). Structural component of striated muscles which plays a role in myofibrillogenesis. Probably involved in the assembly of myosin into sarcomeric A bands in striated muscle. Has serine/threonine protein kinase activity and phosphorylates N-cadherin CDH2 and sodium/potassium-transporting ATPase subunit ATP1B1. Binds (via the PH domain) strongly to phosphatidylinositol 3,4-bisphosphate (PtdIns(3,4)P2) and phosphatidylinositol 4,5-bisphosphate (PtdIns(4,5)P2), and to a lesser extent to phosphatidylinositol 3-phosphate (PtdIns(3)P), phosphatidylinositol 4-phosphate (PtdIns(4)P), phosphatidylinositol 5-phosphate (PtdIns(5)P) and phosphatidylinositol 3,4,5-trisphosphate (PtdIns(3,4,5)P3). The chain is Obscurin (OBSCN) from Homo sapiens (Human).